We begin with the raw amino-acid sequence, 161 residues long: Insulin-like growth factor 1, juvenile form (161 aa).

The tract at residues 45-73 (GPETLCGAELVDTLQFVCGDRGFYFSKPT) is b. 3 disulfides stabilise this stretch: Cys50–Cys92, Cys62–Cys105, and Cys91–Cys96. The c stretch occupies residues 74 to 85 (GYGPSSRRSHNR). The a stretch occupies residues 86 to 106 (GIVDECCFQSCELRRLEMYCA). The segment at 107-114 (PVKPGKTP) is d. A disordered region spans residues 111-161 (GKTPRSVRAQRHTDSPRTAKKPLPGQSHSSYKEVHQKNSSRGNTGGRNYRI). A propeptide spans 115–161 (RSVRAQRHTDSPRTAKKPLPGQSHSSYKEVHQKNSSRGNTGGRNYRI) (e peptide).

This sequence belongs to the insulin family.

Its subcellular location is the secreted. In terms of biological role, the insulin-like growth factors, isolated from plasma, are structurally and functionally related to insulin but have a much higher growth-promoting activity. Acts as a ligand for IGF1R. Binds to the alpha subunit of IGF1R, leading to the activation of the intrinsic tyrosine kinase activity which autophosphorylates tyrosine residues in the beta subunit thus initiatiating a cascade of down-stream signaling events leading to activation of the PI3K-AKT/PKB and the Ras-MAPK pathways. Binds to integrins. Its binding to integrins and subsequent ternary complex formation with integrins and IGFR1 are essential for IGF1 signaling. The polypeptide is Insulin-like growth factor 1, juvenile form (Cyprinus carpio (Common carp)).